Here is a 232-residue protein sequence, read N- to C-terminus: Lipoprotein-releasing system ATP-binding protein LolD (232 aa).

The ABC transporter domain maps to 6 to 231; sequence ISCENLNKVY…KLTIKESQHV (226 aa). 42–49 is a binding site for ATP; sequence GSSGSGKS.

The protein belongs to the ABC transporter superfamily. Lipoprotein translocase (TC 3.A.1.125) family. In terms of assembly, the complex is composed of two ATP-binding proteins (LolD) and two transmembrane proteins (LolC and LolE).

It is found in the cell inner membrane. Its function is as follows. Part of the ABC transporter complex LolCDE involved in the translocation of mature outer membrane-directed lipoproteins, from the inner membrane to the periplasmic chaperone, LolA. Responsible for the formation of the LolA-lipoprotein complex in an ATP-dependent manner. The polypeptide is Lipoprotein-releasing system ATP-binding protein LolD (Pseudoalteromonas translucida (strain TAC 125)).